The sequence spans 204 residues: Recombination protein RecR (204 aa).

The C4-type zinc finger occupies 63 to 78 (CNRCFNITVEDPCTIC). In terms of domain architecture, Toprim spans 86–181 (RQVCVVEEPL…RVTRLARGLP (96 aa)).

Belongs to the RecR family.

Its function is as follows. May play a role in DNA repair. It seems to be involved in an RecBC-independent recombinational process of DNA repair. It may act with RecF and RecO. The chain is Recombination protein RecR from Herpetosiphon aurantiacus (strain ATCC 23779 / DSM 785 / 114-95).